Here is a 687-residue protein sequence, read N- to C-terminus: POZ (BTB) and AT hook-containing zinc finger 1 (687 aa).

A BTB domain is found at 41–130 (CDVLLRVGDE…AYTSRIVVRL (90 aa)). A compositionally biased stretch (polar residues) spans 250-260 (PFPNVASSAPP). The disordered stretch occupies residues 250–279 (PFPNVASSAPPLTSKRGRGRPRKANLLDSM). A C2H2-type 1 zinc finger spans residues 292–314 (LPCGLCGKVFTDANRLRQHEAQH). Residues 332-351 (GENGLPISEDPDGPRKRSRT) are disordered. C2H2-type zinc fingers lie at residues 355–377 (VACE…KLSH), 383–405 (YSCP…VRSH), 413–436 (YICQ…KQVH), 442–464 (HKCQ…LACH), and 495–517 (NFCS…VKTH). Residues 564 to 587 (SYGDLSDASDLKTPEKQSANGSFS) form a disordered region. The C2H2-type 7 zinc finger occupies 605 to 628 (YPCPECGSFFRSKSYLNKHIQKVH).

In terms of assembly, homodimer. Interacts with RNF4. Interacts (via C-terminus) with TP53; this interaction inhibits TP53 ability to activate transcription. As to expression, widely expressed at high levels during embryogenesis, especially in the central nervous system, especially to the actively proliferating neuroblasts in the periventricular neocortical neuroepithelium, in the telencephalic cortical plate and in the hippocampus. Also expressed in a stage-specific manner in the mouse germinal epithelium. While strongly expressed during brain development,m its expression turns down in adult brain.

It is found in the nucleus. Its function is as follows. Transcriptional regulator that plays a role in many biological processes such as embryogenesis, senescence, T-cell development or neurogenesis. Interacts with the TP53 protein to control genes that are important in proliferation and in the DNA-damage response. Mechanistically, the interaction inhibits the DNA binding and transcriptional activity of TP53/p53. Part of the transcriptional network modulating regulatory T-cell development and controls the generation of the regulatory T-cell pool under homeostatic conditions. The protein is POZ (BTB) and AT hook-containing zinc finger 1 of Mus musculus (Mouse).